The sequence spans 101 residues: Small ribosomal subunit protein uS14 (101 aa).

The protein belongs to the universal ribosomal protein uS14 family. As to quaternary structure, part of the 30S ribosomal subunit. Contacts proteins S3 and S10.

Functionally, binds 16S rRNA, required for the assembly of 30S particles and may also be responsible for determining the conformation of the 16S rRNA at the A site. The protein is Small ribosomal subunit protein uS14 of Ehrlichia chaffeensis (strain ATCC CRL-10679 / Arkansas).